The primary structure comprises 919 residues: Translation initiation factor IF-2 (919 aa).

The span at Met-93–Pro-107 shows a compositional bias: basic and acidic residues. Disordered stretches follow at residues Met-93–Pro-145 and Lys-158–Glu-279. The segment covering Leu-136–Pro-145 has biased composition (pro residues). The segment covering Lys-158–Lys-171 has biased composition (basic and acidic residues). Residues Lys-172 to Lys-193 are compositionally biased toward low complexity. 2 stretches are compositionally biased toward basic and acidic residues: residues Pro-194–Glu-203 and Gly-256–Glu-279. Residues Pro-420 to Lys-589 form the tr-type G domain. A G1 region spans residues Gly-429 to Thr-436. Gly-429–Thr-436 serves as a coordination point for GTP. A G2 region spans residues Gly-454 to Ala-458. Residues Asp-475–Gly-478 form a G3 region. Residues Asp-475–His-479 and Asn-529–Asp-532 contribute to the GTP site. The G4 stretch occupies residues Asn-529–Asp-532. Positions Ser-565–Lys-567 are G5.

It belongs to the TRAFAC class translation factor GTPase superfamily. Classic translation factor GTPase family. IF-2 subfamily.

The protein localises to the cytoplasm. One of the essential components for the initiation of protein synthesis. Protects formylmethionyl-tRNA from spontaneous hydrolysis and promotes its binding to the 30S ribosomal subunits. Also involved in the hydrolysis of GTP during the formation of the 70S ribosomal complex. This Syntrophus aciditrophicus (strain SB) protein is Translation initiation factor IF-2.